The following is a 238-amino-acid chain: Large ribosomal subunit protein uL2 (238 aa).

Positions A197–W219 are disordered.

It belongs to the universal ribosomal protein uL2 family. In terms of assembly, part of the 50S ribosomal subunit. Forms a bridge to the 30S subunit in the 70S ribosome.

Its function is as follows. One of the primary rRNA binding proteins. Required for association of the 30S and 50S subunits to form the 70S ribosome, for tRNA binding and peptide bond formation. It has been suggested to have peptidyltransferase activity; this is somewhat controversial. Makes several contacts with the 16S rRNA in the 70S ribosome. The protein is Large ribosomal subunit protein uL2 of Nanoarchaeum equitans (strain Kin4-M).